The sequence spans 149 residues: Calmodulin (149 aa).

A2 carries the post-translational modification N-acetylalanine. EF-hand domains lie at 8 to 43 (EQVS…LGQN), 44 to 79 (PSES…KMKD), 81 to 116 (DSEE…IGEK), and 117 to 149 (LTDD…MMQK). Residues D21, D23, D25, Q27, E32, D57, D59, N61, T63, E68, D94, D96, N98, E105, D130, D132, D134, R136, and E141 each coordinate Ca(2+).

The protein belongs to the calmodulin family.

Its function is as follows. Calmodulin mediates the control of a large number of enzymes, ion channels and other proteins by Ca(2+). Among the enzymes to be stimulated by the calmodulin-Ca(2+) complex are a number of protein kinases and phosphatases. The polypeptide is Calmodulin (camA) (Emericella nidulans (strain FGSC A4 / ATCC 38163 / CBS 112.46 / NRRL 194 / M139) (Aspergillus nidulans)).